We begin with the raw amino-acid sequence, 366 residues long: Probable dual-specificity RNA methyltransferase RlmN (366 aa).

Glu-108 acts as the Proton acceptor in catalysis. In terms of domain architecture, Radical SAM core spans 114-352 (YSDRSTLCIS…CTVRDTKGQE (239 aa)). A disulfide bridge connects residues Cys-121 and Cys-357. [4Fe-4S] cluster is bound by residues Cys-128, Cys-132, and Cys-135. S-adenosyl-L-methionine contacts are provided by residues 178 to 179 (GE), Ser-212, 235 to 237 (SLH), and Asn-314. Residue Cys-357 is the S-methylcysteine intermediate of the active site.

It belongs to the radical SAM superfamily. RlmN family. The cofactor is [4Fe-4S] cluster.

Its subcellular location is the cytoplasm. The enzyme catalyses adenosine(2503) in 23S rRNA + 2 reduced [2Fe-2S]-[ferredoxin] + 2 S-adenosyl-L-methionine = 2-methyladenosine(2503) in 23S rRNA + 5'-deoxyadenosine + L-methionine + 2 oxidized [2Fe-2S]-[ferredoxin] + S-adenosyl-L-homocysteine. It catalyses the reaction adenosine(37) in tRNA + 2 reduced [2Fe-2S]-[ferredoxin] + 2 S-adenosyl-L-methionine = 2-methyladenosine(37) in tRNA + 5'-deoxyadenosine + L-methionine + 2 oxidized [2Fe-2S]-[ferredoxin] + S-adenosyl-L-homocysteine. In terms of biological role, specifically methylates position 2 of adenine 2503 in 23S rRNA and position 2 of adenine 37 in tRNAs. The sequence is that of Probable dual-specificity RNA methyltransferase RlmN from Corynebacterium glutamicum (strain ATCC 13032 / DSM 20300 / JCM 1318 / BCRC 11384 / CCUG 27702 / LMG 3730 / NBRC 12168 / NCIMB 10025 / NRRL B-2784 / 534).